We begin with the raw amino-acid sequence, 503 residues long: Maturase K (503 aa).

This sequence belongs to the intron maturase 2 family. MatK subfamily.

The protein localises to the plastid. The protein resides in the chloroplast. Its function is as follows. Usually encoded in the trnK tRNA gene intron. Probably assists in splicing its own and other chloroplast group II introns. This is Maturase K from Rosa foetida (Austrian briar).